Reading from the N-terminus, the 70-residue chain is NAD(P)H-quinone oxidoreductase subunit L (70 aa).

Helical transmembrane passes span 2–22 (IVALLYLILAGAYLLVIPIAV) and 39–59 (LLMYFLVFFFFPGLLVLSPFA).

It belongs to the complex I NdhL subunit family. NDH-1 can be composed of about 15 different subunits; different subcomplexes with different compositions have been identified which probably have different functions.

It is found in the cellular thylakoid membrane. It catalyses the reaction a plastoquinone + NADH + (n+1) H(+)(in) = a plastoquinol + NAD(+) + n H(+)(out). It carries out the reaction a plastoquinone + NADPH + (n+1) H(+)(in) = a plastoquinol + NADP(+) + n H(+)(out). NDH-1 shuttles electrons from an unknown electron donor, via FMN and iron-sulfur (Fe-S) centers, to quinones in the respiratory and/or the photosynthetic chain. The immediate electron acceptor for the enzyme in this species is believed to be plastoquinone. Couples the redox reaction to proton translocation, and thus conserves the redox energy in a proton gradient. Cyanobacterial NDH-1 also plays a role in inorganic carbon-concentration. The protein is NAD(P)H-quinone oxidoreductase subunit L of Nostoc punctiforme (strain ATCC 29133 / PCC 73102).